We begin with the raw amino-acid sequence, 254 residues long: Small ribosomal subunit protein uS3 (254 aa).

The KH type-2 domain maps to 38 to 106 (IRKYVLARIP…DVQINIFEIK (69 aa)). Low complexity predominate over residues 215-238 (NVGNAASGASSSSNNDNASPNQGG). Residues 215 to 254 (NVGNAASGASSSSNNDNASPNQGGPRRKRGGEGNRKKSNK) are disordered. Residues 244–254 (GGEGNRKKSNK) show a composition bias toward basic and acidic residues.

The protein belongs to the universal ribosomal protein uS3 family. As to quaternary structure, part of the 30S ribosomal subunit. Forms a tight complex with proteins S10 and S14.

Functionally, binds the lower part of the 30S subunit head. Binds mRNA in the 70S ribosome, positioning it for translation. This Cytophaga hutchinsonii (strain ATCC 33406 / DSM 1761 / CIP 103989 / NBRC 15051 / NCIMB 9469 / D465) protein is Small ribosomal subunit protein uS3.